The primary structure comprises 476 residues: MKWETVIGLEIHVQLNTKSKIFSSALTKYGKKPNSQACAIDLGLPGVLPVLNVEAVNKAIRFGVAINAHINKRNIFDRKNYFYPDLPKGYQISQMDWPIIGKGKIEIILGNQTKVICITRAHLEEDAGKSIHDMFDDNTAIDLNRAGIPLLEIVSEPDMRSAKEAVAYTKKIHTLVQYIDICDGNMQEGSFRCDANISIRPKGQKELGTRAELKNINSFKFLERAINFEVKRQKDILEEGEKVVQETRLYDSIKNETRSMRLKEETNDYRYFPDPDLLPIEISNELLEKVKQTLPELPDQRKTRFVVELGLSEYDADVLTSQKSLADYFEVMLEDNIVNIKLCANWVMGELSAALNKHQIDIQNSPITAPALSLLISRISDDTISVKTAKDVFKYMWDSKNSADEIIKVRGLKQMTNMVEIEVIIEQVIANSTLQVSQFKLGNNKILGFFIGKIMELTGGKVNPKQVNELLRKKLL.

Belongs to the GatB/GatE family. GatB subfamily. As to quaternary structure, heterotrimer of A, B and C subunits.

The enzyme catalyses L-glutamyl-tRNA(Gln) + L-glutamine + ATP + H2O = L-glutaminyl-tRNA(Gln) + L-glutamate + ADP + phosphate + H(+). The catalysed reaction is L-aspartyl-tRNA(Asn) + L-glutamine + ATP + H2O = L-asparaginyl-tRNA(Asn) + L-glutamate + ADP + phosphate + 2 H(+). Its function is as follows. Allows the formation of correctly charged Asn-tRNA(Asn) or Gln-tRNA(Gln) through the transamidation of misacylated Asp-tRNA(Asn) or Glu-tRNA(Gln) in organisms which lack either or both of asparaginyl-tRNA or glutaminyl-tRNA synthetases. The reaction takes place in the presence of glutamine and ATP through an activated phospho-Asp-tRNA(Asn) or phospho-Glu-tRNA(Gln). This is Aspartyl/glutamyl-tRNA(Asn/Gln) amidotransferase subunit B from Vesicomyosocius okutanii subsp. Calyptogena okutanii (strain HA).